The following is a 141-amino-acid chain: Hemoglobin subunit alpha-1/2 (141 aa).

One can recognise a Globin domain in the interval Val1 to Arg141. Position 3 is a phosphoserine (Ser3). N6-succinyllysine is present on residues Lys7 and Lys11. Lys16 carries the post-translational modification N6-acetyllysine; alternate. At Lys16 the chain carries N6-succinyllysine; alternate. Residue Tyr24 is modified to Phosphotyrosine. Ser35 bears the Phosphoserine mark. Lys40 is modified (N6-succinyllysine). Ser49 is modified (phosphoserine). Position 58 (His58) interacts with O2. Residue His87 participates in heme b binding. Position 102 is a phosphoserine (Ser102). Thr108 carries the post-translational modification Phosphothreonine. A Phosphoserine modification is found at Ser124. Phosphothreonine is present on residues Thr134 and Thr137. Ser138 carries the post-translational modification Phosphoserine.

This sequence belongs to the globin family. As to quaternary structure, heterotetramer of two alpha chains and two beta chains. As to expression, red blood cells.

In terms of biological role, involved in oxygen transport from the lung to the various peripheral tissues. This Odocoileus virginianus virginianus (Virginia white-tailed deer) protein is Hemoglobin subunit alpha-1/2.